The sequence spans 413 residues: Scarecrow-like protein 21 (413 aa).

The GRAS domain occupies 41–413 (IVEAISRGDL…RILVSSCAWK (373 aa)). The segment at 48–108 (GDLKLVLVAC…VARLAASGSS (61 aa)) is leucine repeat I (LRI). Residues 127–192 (VYVLHEVCPY…GGAPNIRITG (66 aa)) form a VHIID region. Positions 158 to 162 (IHIID) match the VHIID motif. The tract at residues 201–233 (TVKKRLEKLAKKFDVPFRFNAVSRPSCEVEVEN) is leucine repeat II (LRII). The tract at residues 242-336 (LGVNFAYMLH…QHCMARDVVN (95 aa)) is PFYRE. Residues 339–413 (ACEGAERIER…RILVSSCAWK (75 aa)) form an SAW region.

The protein belongs to the GRAS family. As to quaternary structure, interacts with Meloidogyne incognita 16D10. In terms of tissue distribution, expressed in seedlings, roots, cotyledons, leaves and flowers.

It is found in the nucleus. Probable transcription factor involved in plant development. In Arabidopsis thaliana (Mouse-ear cress), this protein is Scarecrow-like protein 21 (SCL21).